A 163-amino-acid polypeptide reads, in one-letter code: Lipoprotein signal peptidase (163 aa).

3 helical membrane-spanning segments follow: residues 11–31, 63–83, and 88–108; these read ILIAVFVVIFDQVTKYIIATT, KMTFFFIITIIILIALVYFFI, and YNLFMQVAISLLFAGALGNFI. Catalysis depends on residues D118 and D136. A helical membrane pass occupies residues 131-151; it reads IFNIADSSLTIGVILIIIALL.

This sequence belongs to the peptidase A8 family.

Its subcellular location is the cell membrane. The enzyme catalyses Release of signal peptides from bacterial membrane prolipoproteins. Hydrolyzes -Xaa-Yaa-Zaa-|-(S,diacylglyceryl)Cys-, in which Xaa is hydrophobic (preferably Leu), and Yaa (Ala or Ser) and Zaa (Gly or Ala) have small, neutral side chains.. It functions in the pathway protein modification; lipoprotein biosynthesis (signal peptide cleavage). Its function is as follows. This protein specifically catalyzes the removal of signal peptides from prolipoproteins. This Staphylococcus aureus (strain Mu3 / ATCC 700698) protein is Lipoprotein signal peptidase.